The sequence spans 179 residues: NAD(P)H-quinone oxidoreductase subunit I, chloroplastic (179 aa).

4Fe-4S ferredoxin-type domains are found at residues 55–84 (GRIH…VDWR) and 95–124 (LNYS…MTEE). Residues cysteine 64, cysteine 67, cysteine 70, cysteine 74, cysteine 104, cysteine 107, cysteine 110, and cysteine 114 each contribute to the [4Fe-4S] cluster site.

Belongs to the complex I 23 kDa subunit family. NDH is composed of at least 16 different subunits, 5 of which are encoded in the nucleus. The cofactor is [4Fe-4S] cluster.

It localises to the plastid. Its subcellular location is the chloroplast thylakoid membrane. It carries out the reaction a plastoquinone + NADH + (n+1) H(+)(in) = a plastoquinol + NAD(+) + n H(+)(out). The catalysed reaction is a plastoquinone + NADPH + (n+1) H(+)(in) = a plastoquinol + NADP(+) + n H(+)(out). NDH shuttles electrons from NAD(P)H:plastoquinone, via FMN and iron-sulfur (Fe-S) centers, to quinones in the photosynthetic chain and possibly in a chloroplast respiratory chain. The immediate electron acceptor for the enzyme in this species is believed to be plastoquinone. Couples the redox reaction to proton translocation, and thus conserves the redox energy in a proton gradient. This is NAD(P)H-quinone oxidoreductase subunit I, chloroplastic from Nuphar advena (Common spatterdock).